Reading from the N-terminus, the 152-residue chain is Large ribosomal subunit protein bL9 (152 aa).

This sequence belongs to the bacterial ribosomal protein bL9 family.

In terms of biological role, binds to the 23S rRNA. The protein is Large ribosomal subunit protein bL9 of Rippkaea orientalis (strain PCC 8801 / RF-1) (Cyanothece sp. (strain PCC 8801)).